Consider the following 101-residue polypeptide: Citrinin resistance protein, mitochondrial (101 aa).

The protein resides in the mitochondrion. Mitochondrial protein that is involved in citrinin resistance. The chain is Citrinin resistance protein, mitochondrial from Saccharomyces cerevisiae (strain ATCC 204508 / S288c) (Baker's yeast).